The primary structure comprises 472 residues: Bifunctional protein HldE (472 aa).

The ribokinase stretch occupies residues 1–315 (MAKRVKILVV…QLLNSSFGAN (315 aa)). 192 to 195 (NKKE) lines the ATP pocket. D260 is an active-site residue. A cytidylyltransferase region spans residues 340–472 (FTNGCFDILH…IKDAKNDDKK (133 aa)).

This sequence in the N-terminal section; belongs to the carbohydrate kinase PfkB family. In the C-terminal section; belongs to the cytidylyltransferase family. As to quaternary structure, homodimer.

The enzyme catalyses D-glycero-beta-D-manno-heptose 7-phosphate + ATP = D-glycero-beta-D-manno-heptose 1,7-bisphosphate + ADP + H(+). It catalyses the reaction D-glycero-beta-D-manno-heptose 1-phosphate + ATP + H(+) = ADP-D-glycero-beta-D-manno-heptose + diphosphate. The protein operates within nucleotide-sugar biosynthesis; ADP-L-glycero-beta-D-manno-heptose biosynthesis; ADP-L-glycero-beta-D-manno-heptose from D-glycero-beta-D-manno-heptose 7-phosphate: step 1/4. Its pathway is nucleotide-sugar biosynthesis; ADP-L-glycero-beta-D-manno-heptose biosynthesis; ADP-L-glycero-beta-D-manno-heptose from D-glycero-beta-D-manno-heptose 7-phosphate: step 3/4. In terms of biological role, catalyzes the phosphorylation of D-glycero-D-manno-heptose 7-phosphate at the C-1 position to selectively form D-glycero-beta-D-manno-heptose-1,7-bisphosphate. Its function is as follows. Catalyzes the ADP transfer from ATP to D-glycero-beta-D-manno-heptose 1-phosphate, yielding ADP-D-glycero-beta-D-manno-heptose. This chain is Bifunctional protein HldE, found in Campylobacter concisus (strain 13826).